The chain runs to 665 residues: MAASNHSSGKPGGVLSDALCRELWHACAGPLVTLPREGERVYYFPEGHMEQLEASMHQGLEQQMPSFNLPSKILCKVINIQRRAEPETDEVYAQITLLPELDQSEPTSPDAPVQEPEKCTVHSFCKTLTASDTSTHGGFSVLRRHADDCLPPLDMSQQPPWQELVATDLHNSEWHFRHIFRGQPRRHLLTTGWSVFVSSKKLVAGDAFIFLRGENEELRVGVRRHMRQQTNIPSSVISSHSMHIGVLATAAHAITTGTIFSVFYKPRTSRSEFIVSVNRYLEAKTQKLSVGMRFKMRFEGEEAPEKRFSGTIVGVQENKSSVWHDSEWRSLKVQWDEPSSVFRPERVSPWELEPLVANSTPSSQPQPPQRNKRPRPPGLPSPATGPSGPVTPDGVWKSPADTPSSVPLFSPPAKAATFGHGGNKSFGVSIGSAFWPTNADSAAESFASAFNNESTEKKQTNGNVCRLFGFELVENVNVDECFSAASVSGAVAVDQPVPSNEFDSGQQSEPLNINQSDIPSGSGDPEKSSLRSPQESQSRQIRSCTKVHMQGSAVGRAIDLTRSECYEDLFKKLEEMFDIKGELLESTKKWQVVYTDDEDDMMMVGDDPWNEFCGMVRKIFIYTPEEVKKLSPKNKLAVNARMQLKADAEENGNTEGRSSSMAGSR.

The segment at residues Phe124 to Met226 is a DNA-binding region (TF-B3). Disordered stretches follow at residues Val356–Leu408, Pro496–Arg542, and Lys645–Arg665. 3 stretches are compositionally biased toward polar residues: residues Val497–Pro519, Leu530–Arg542, and Asn651–Arg665. A PB1 domain is found at Arg542–Lys635.

The protein belongs to the ARF family. In terms of assembly, homodimers and heterodimers. Interacts with the auxin-responsive proteins IAA12, IAA13, IAA17 and with ARF2. Binds to RIN13 in the nucleus. In terms of tissue distribution, expressed in the whole plant.

It localises to the nucleus. The protein resides in the cytoplasm. Functionally, auxin response factors (ARFs) are transcriptional factors that bind specifically to the DNA sequence 5'-TGTCTC-3' found in the auxin-responsive promoter elements (AuxREs). Seems to act as transcriptional repressor. Formation of heterodimers with Aux/IAA proteins may alter their ability to modulate early auxin response genes expression. Promotes flowering, stamen development, floral organ abscission and fruit dehiscence. Acts as a repressor of IAA2, IAA3 and IAA7. Together with RIN13, promotes leaf senescence and cell death. The protein is Auxin response factor 1 of Arabidopsis thaliana (Mouse-ear cress).